Reading from the N-terminus, the 887-residue chain is Translation initiation factor IF-2 (887 aa).

3 disordered regions span residues 31-87, 94-113, and 129-285; these read KLAQ…PRRI, SFVSEDLNSPQPPVPVDSDA, and VETE…KWRK. Residues 42 to 59 are compositionally biased toward basic and acidic residues; the sequence is SSSEKPSTKVPEKIAKEK. Basic and acidic residues-rich tracts occupy residues 150–171 and 199–212; these read VVAKEPPAPKKEPEVVVKKEPP and PKKEDKPAPKEKTK. Residues 213-223 show a composition bias toward low complexity; it reads TTQTKPQQSSD. A compositionally biased stretch (basic and acidic residues) spans 241–273; it reads YRRDVSKKSGSDFRDRAKKDDNPKAFTGRDRYG. One can recognise a tr-type G domain in the interval 393–562; the sequence is TRPPIVAFMG…ALQAEVLELK (170 aa). The G1 stretch occupies residues 402 to 409; it reads GHVDHGKT. 402-409 contacts GTP; that stretch reads GHVDHGKT. The interval 427–431 is G2; sequence AITQH. The G3 stretch occupies residues 448–451; that stretch reads DTPG. Residues 448–452 and 502–505 contribute to the GTP site; these read DTPGH and NKCD. The G4 stretch occupies residues 502-505; sequence NKCD. Positions 538-540 are G5; the sequence is SAK.

This sequence belongs to the TRAFAC class translation factor GTPase superfamily. Classic translation factor GTPase family. IF-2 subfamily.

It localises to the cytoplasm. Functionally, one of the essential components for the initiation of protein synthesis. Protects formylmethionyl-tRNA from spontaneous hydrolysis and promotes its binding to the 30S ribosomal subunits. Also involved in the hydrolysis of GTP during the formation of the 70S ribosomal complex. In Chlamydia caviae (strain ATCC VR-813 / DSM 19441 / 03DC25 / GPIC) (Chlamydophila caviae), this protein is Translation initiation factor IF-2.